The following is a 242-amino-acid chain: Carboxy-S-adenosyl-L-methionine synthase (242 aa).

S-adenosyl-L-methionine is bound by residues Y39, 64–66 (GCS), 89–90 (DN), 117–118 (DI), N132, and R199.

The protein belongs to the class I-like SAM-binding methyltransferase superfamily. Cx-SAM synthase family. Homodimer.

The catalysed reaction is prephenate + S-adenosyl-L-methionine = carboxy-S-adenosyl-L-methionine + 3-phenylpyruvate + H2O. Its function is as follows. Catalyzes the conversion of S-adenosyl-L-methionine (SAM) to carboxy-S-adenosyl-L-methionine (Cx-SAM). This chain is Carboxy-S-adenosyl-L-methionine synthase, found in Psychromonas ingrahamii (strain DSM 17664 / CCUG 51855 / 37).